The primary structure comprises 210 residues: T-cell surface glycoprotein CD8 beta chain (210 aa).

A signal peptide spans 1–21 (MRPRLWLLLAAQLAVLHGSSV). The Ig-like V-type domain occupies 22–132 (LQQTPAYIKV…ELTFGKGTQL (111 aa)). The Extracellular segment spans residues 22-170 (LQQTPAYIKV…ETQKGPLCSP (149 aa)). Cysteines 41 and 116 form a disulfide. A glycan (N-linked (GlcNAc...) asparagine) is linked at Asn-102. Residues 171-191 (ITLGLLVAGVLVLLVSLGVAI) traverse the membrane as a helical segment. The Cytoplasmic portion of the chain corresponds to 192-210 (HLCCRRRRARLRFMKQFYK).

In terms of assembly, forms disulfide-linked heterodimers with CD8A at the cell surface. Interacts with CD3D; this interaction couples TCR-CD3 with CD8. Interacts with LCK. In terms of processing, phosphorylated as a consequence of T-cell activation. Post-translationally, palmitoylated at the cytoplasmic tail and thereby targets the heterodimer CD8A/CD8B to lipid rafts unlike CD8A homodimers.

The protein localises to the cell membrane. In terms of biological role, integral membrane glycoprotein that plays an essential role in the immune response and serves multiple functions in responses against both external and internal offenses. In T-cells, functions primarily as a coreceptor for MHC class I molecule:peptide complex. The antigens presented by class I peptides are derived from cytosolic proteins while class II derived from extracellular proteins. Interacts simultaneously with the T-cell receptor (TCR) and the MHC class I proteins presented by antigen presenting cells (APCs). In turn, recruits the Src kinase LCK to the vicinity of the TCR-CD3 complex. A palmitoylation site in the cytoplasmic tail of CD8B chain contributes to partitioning of CD8 into the plasma membrane lipid rafts where signaling proteins are enriched. Once LCK recruited, it initiates different intracellular signaling pathways by phosphorylating various substrates ultimately leading to lymphokine production, motility, adhesion and activation of cytotoxic T-lymphocytes (CTLs). Additionally, plays a critical role in thymic selection of CD8+ T-cells. This Pongo pygmaeus (Bornean orangutan) protein is T-cell surface glycoprotein CD8 beta chain (CD8B).